The chain runs to 87 residues: Small ribosomal subunit protein bS18 (87 aa).

The protein belongs to the bacterial ribosomal protein bS18 family. As to quaternary structure, part of the 30S ribosomal subunit. Forms a tight heterodimer with protein bS6.

Its function is as follows. Binds as a heterodimer with protein bS6 to the central domain of the 16S rRNA, where it helps stabilize the platform of the 30S subunit. In Mesomycoplasma hyopneumoniae (strain 232) (Mycoplasma hyopneumoniae), this protein is Small ribosomal subunit protein bS18.